Here is a 220-residue protein sequence, read N- to C-terminus: Ribosomal RNA large subunit methyltransferase E (220 aa).

S-adenosyl-L-methionine is bound by residues Gly-60, Trp-62, Asp-92, Asp-108, and Asp-133. Catalysis depends on Lys-173, which acts as the Proton acceptor.

Belongs to the class I-like SAM-binding methyltransferase superfamily. RNA methyltransferase RlmE family.

It is found in the cytoplasm. The enzyme catalyses uridine(2552) in 23S rRNA + S-adenosyl-L-methionine = 2'-O-methyluridine(2552) in 23S rRNA + S-adenosyl-L-homocysteine + H(+). Its function is as follows. Specifically methylates the uridine in position 2552 of 23S rRNA at the 2'-O position of the ribose in the fully assembled 50S ribosomal subunit. This is Ribosomal RNA large subunit methyltransferase E from Paraburkholderia phytofirmans (strain DSM 17436 / LMG 22146 / PsJN) (Burkholderia phytofirmans).